The primary structure comprises 413 residues: Protein LAZY 1 (413 aa).

The chain crosses the membrane as a helical span at residues 71 to 91 (FTFGGSGLLTIGTLGIAAVAV). The segment covering 103 to 124 (DADADSDFDDNDDTAGDDEDQV) has biased composition (acidic residues). Disordered stretches follow at residues 103 to 127 (DADA…VDSA) and 261 to 308 (EDGG…ASAT). Short sequence motifs (nuclear localization signal) lie at residues 275 to 298 (RKAG…EKVP) and 338 to 345 (KKSRKRGS).

Belongs to the LAZY family. In terms of tissue distribution, expressed in the node of the stem, initiating leaf founder cells, young leaf primordia, tips of axillary meristems, spikelet pair meristems of developing tassels and ears, male flower primordia, tassels, ears, silks and seeds. Expressed in leaf sheaths, leaf pulvinus and shoot apical meristem (SAM).

It is found in the cell membrane. It localises to the nucleus. Involved in the regulation of shoot gravitropism, and tassel and ear development through the regulation of polar auxin transport (PAT) and auxin signaling. Acts as a negative regulator of basipetal PAT, but positive regulator of lateral auxin transport. Involved in the regulation of shoot gravitropism and leaf angle through the regulation of cell development. The chain is Protein LAZY 1 from Zea mays (Maize).